We begin with the raw amino-acid sequence, 208 residues long: Uracil phosphoribosyltransferase (208 aa).

5-phospho-alpha-D-ribose 1-diphosphate is bound by residues Arg78, Arg103, and 130 to 138; that span reads DPMLATGGS. Residues Ile193 and 198 to 200 contribute to the uracil site; that span reads GDA. Asp199 lines the 5-phospho-alpha-D-ribose 1-diphosphate pocket.

This sequence belongs to the UPRTase family. Mg(2+) is required as a cofactor.

The catalysed reaction is UMP + diphosphate = 5-phospho-alpha-D-ribose 1-diphosphate + uracil. It functions in the pathway pyrimidine metabolism; UMP biosynthesis via salvage pathway; UMP from uracil: step 1/1. Its activity is regulated as follows. Allosterically activated by GTP. Functionally, catalyzes the conversion of uracil and 5-phospho-alpha-D-ribose 1-diphosphate (PRPP) to UMP and diphosphate. In Escherichia coli O139:H28 (strain E24377A / ETEC), this protein is Uracil phosphoribosyltransferase.